We begin with the raw amino-acid sequence, 184 residues long: Threonylcarbamoyl-AMP synthase (184 aa).

Residues M1 to G184 form the YrdC-like domain.

It belongs to the SUA5 family. TsaC subfamily.

Its subcellular location is the cytoplasm. It carries out the reaction L-threonine + hydrogencarbonate + ATP = L-threonylcarbamoyladenylate + diphosphate + H2O. Functionally, required for the formation of a threonylcarbamoyl group on adenosine at position 37 (t(6)A37) in tRNAs that read codons beginning with adenine. Catalyzes the conversion of L-threonine, HCO(3)(-)/CO(2) and ATP to give threonylcarbamoyl-AMP (TC-AMP) as the acyladenylate intermediate, with the release of diphosphate. The chain is Threonylcarbamoyl-AMP synthase from Actinobacillus pleuropneumoniae serotype 7 (strain AP76).